A 491-amino-acid chain; its full sequence is UDP-N-acetylmuramate--L-alanine ligase (491 aa).

126–132 (GTHGKTT) serves as a coordination point for ATP.

It belongs to the MurCDEF family.

The protein localises to the cytoplasm. It carries out the reaction UDP-N-acetyl-alpha-D-muramate + L-alanine + ATP = UDP-N-acetyl-alpha-D-muramoyl-L-alanine + ADP + phosphate + H(+). It functions in the pathway cell wall biogenesis; peptidoglycan biosynthesis. Its function is as follows. Cell wall formation. The protein is UDP-N-acetylmuramate--L-alanine ligase of Escherichia coli (strain K12 / MC4100 / BW2952).